Consider the following 200-residue polypeptide: Ribonuclease HII (200 aa).

One can recognise an RNase H type-2 domain in the interval 14–200 (SRLAGVDEVG…FAPVKQWQLL (187 aa)). Asp20, Glu21, and Asp112 together coordinate a divalent metal cation.

It belongs to the RNase HII family. It depends on Mn(2+) as a cofactor. Requires Mg(2+) as cofactor.

It is found in the cytoplasm. It catalyses the reaction Endonucleolytic cleavage to 5'-phosphomonoester.. Endonuclease that specifically degrades the RNA of RNA-DNA hybrids. The polypeptide is Ribonuclease HII (Chromohalobacter salexigens (strain ATCC BAA-138 / DSM 3043 / CIP 106854 / NCIMB 13768 / 1H11)).